Consider the following 251-residue polypeptide: 3-deoxy-manno-octulosonate cytidylyltransferase (251 aa).

Belongs to the KdsB family.

The protein localises to the cytoplasm. It catalyses the reaction 3-deoxy-alpha-D-manno-oct-2-ulosonate + CTP = CMP-3-deoxy-beta-D-manno-octulosonate + diphosphate. It functions in the pathway nucleotide-sugar biosynthesis; CMP-3-deoxy-D-manno-octulosonate biosynthesis; CMP-3-deoxy-D-manno-octulosonate from 3-deoxy-D-manno-octulosonate and CTP: step 1/1. It participates in bacterial outer membrane biogenesis; lipopolysaccharide biosynthesis. Its function is as follows. Activates KDO (a required 8-carbon sugar) for incorporation into bacterial lipopolysaccharide in Gram-negative bacteria. The sequence is that of 3-deoxy-manno-octulosonate cytidylyltransferase from Sodalis glossinidius (strain morsitans).